The primary structure comprises 122 residues: Small ribosomal subunit protein uS13 (122 aa).

A disordered region spans residues 93 to 122; sequence RLSLPVRGQRTKTNSRTRKGKRKTVAGKKK. Positions 101–122 are enriched in basic residues; sequence QRTKTNSRTRKGKRKTVAGKKK.

It belongs to the universal ribosomal protein uS13 family. Part of the 30S ribosomal subunit. Forms a loose heterodimer with protein S19. Forms two bridges to the 50S subunit in the 70S ribosome.

In terms of biological role, located at the top of the head of the 30S subunit, it contacts several helices of the 16S rRNA. In the 70S ribosome it contacts the 23S rRNA (bridge B1a) and protein L5 of the 50S subunit (bridge B1b), connecting the 2 subunits; these bridges are implicated in subunit movement. Contacts the tRNAs in the A and P-sites. The protein is Small ribosomal subunit protein uS13 of Chlamydia caviae (strain ATCC VR-813 / DSM 19441 / 03DC25 / GPIC) (Chlamydophila caviae).